A 113-amino-acid polypeptide reads, in one-letter code: Large ribosomal subunit protein uL24 (113 aa).

This sequence belongs to the universal ribosomal protein uL24 family. In terms of assembly, part of the 50S ribosomal subunit.

In terms of biological role, one of two assembly initiator proteins, it binds directly to the 5'-end of the 23S rRNA, where it nucleates assembly of the 50S subunit. Functionally, one of the proteins that surrounds the polypeptide exit tunnel on the outside of the subunit. This is Large ribosomal subunit protein uL24 from Chlamydia felis (strain Fe/C-56) (Chlamydophila felis).